The sequence spans 40 residues: Large ribosomal subunit protein bL36 (40 aa).

The protein belongs to the bacterial ribosomal protein bL36 family.

The protein is Large ribosomal subunit protein bL36 of Corynebacterium urealyticum (strain ATCC 43042 / DSM 7109).